The primary structure comprises 158 residues: Probable flavodoxin 1 (158 aa).

The Flavodoxin-like domain occupies alanine 4 to leucine 144.

It belongs to the flavodoxin family. FMN serves as cofactor.

Its function is as follows. Low-potential electron donor to a number of redox enzymes. In Bacillus subtilis (strain 168), this protein is Probable flavodoxin 1 (ykuN).